Consider the following 25-residue polypeptide: Caerin 1.1 (25 aa).

A Leucine amide modification is found at Leu-25.

As to expression, expressed by the skin dorsal glands.

The protein resides in the secreted. Its function is as follows. Antibacterial peptide with wide spectrum of activity. Active against the Gram-positive bacteria B.cereus (MIC=50 ug/ml), E.faecalis (MIC=25 ug/ml), L.lactis (MIC=1.5 ug/ml), L.innocua (MIC=25 ug/ml), S.aureus (MIC=3 ug/ml), S.epidermidis (MIC=12 ug/ml) and S.uberis (MIC=12 ug/ml), and against the Gram-negative bacteria E.coli (MIC=100 ug/ml) and P.multocida (MIC=25 ug/ml). This chain is Caerin 1.1, found in Litoria peronii (Emerald spotted tree frog).